Reading from the N-terminus, the 198-residue chain is MKFVLDTSIFVNPEVRKNFGDNPTEAMKTFLSYAEKLFGKVEFYMPPGIYREVMHFVDSEELRPAIELYIIKKPPNVHELKIPAFVVYELIEDIRRRIDKGLRVAEKAVRESVLDTDNVDNIIQKLRRNYRRALREGIVDSKEDFELILLAMELDATIVSADVGILTWAQKMGIKWVDSSVFREVLEGLVEKLEGKNL.

Belongs to the HARP family.

The enzyme catalyses Endonucleolytic cleavage of RNA, removing 5'-extranucleotides from tRNA precursor.. RNA-free RNase P that catalyzes the removal of the 5'-leader sequence from pre-tRNA to produce the mature 5'-terminus. The sequence is that of RNA-free ribonuclease P from Thermococcus kodakarensis (strain ATCC BAA-918 / JCM 12380 / KOD1) (Pyrococcus kodakaraensis (strain KOD1)).